The following is a 161-amino-acid chain: uncharacterized protein (161 aa).

Positions 1–35 are cleaved as a signal peptide; that stretch reads MVMAMGFDTVVAAIMATAIIVAVAYTFLAGSTSIA.

This is an uncharacterized protein from Archaeoglobus fulgidus (strain ATCC 49558 / DSM 4304 / JCM 9628 / NBRC 100126 / VC-16).